Consider the following 983-residue polypeptide: Eukaryotic translation initiation factor 4E transporter (983 aa).

Positions 1–22 are disordered; sequence MEKSVAETENGDAFLELKKLPT. Residue Ser4 is modified to Phosphoserine. A YXXXXLphi motif motif is present at residues 29–35; sequence YTKEELL. The disordered stretch occupies residues 40–99; the sequence is RPYSKQRPSCLSEKYDSDGVWDPEKWHASLYPASGRSSPVESLKKESESDRPSLVRRIAD. The segment covering 52–66 has biased composition (basic and acidic residues); that stretch reads EKYDSDGVWDPEKWH. 2 positions are modified to phosphoserine: Ser73 and Ser77. Residues 81–99 show a composition bias toward basic and acidic residues; that stretch reads SLKKESESDRPSLVRRIAD. 4 positions are modified to phosphoserine: Ser114, Ser119, Ser135, and Ser137. Residues 130-160 are interaction with CSDE1; sequence VSSRRSGSPLEKDSDGLRLLGGRRIGSGRII. The short motif at 194–210 is the Nuclear localization signal element; it reads RREFGDSKRVFGERRRN. The segment at 206–229 is disordered; the sequence is ERRRNDSYTEEEPEWFSAGPTSQS. Positions 218–239 are interaction with DDX6; it reads PEWFSAGPTSQSETIELTGFDD. 4 positions are modified to phosphoserine: Ser300, Ser344, Ser352, and Ser373. The tract at residues 341–360 is disordered; the sequence is SNPSRSGSRSSSLGSTPHEE. Residues 344 to 355 show a composition bias toward low complexity; sequence SRSGSRSSSLGS. Lys409 is covalently cross-linked (Glycyl lysine isopeptide (Lys-Gly) (interchain with G-Cter in SUMO2)). At Ser416 the chain carries Phosphoserine. Residues 437-446 carry the Nuclear export signal motif; it reads VEAGLKGLKV. Residues 447–489 form an interaction with LSM14A region; sequence DQQMKNSTPFMAEHLEETLSAASSNRQLKKDGDMTAFNKLVNT. Lys485 is modified (N6-acetyllysine). Ser563 and Ser586 each carry phosphoserine. Disordered stretches follow at residues 585-616, 642-693, 708-800, and 906-951; these read PSPI…SAQM, FYQP…MLSP, REKT…VPGT, and LHPP…SSPV. A Nuclear export signal motif is present at residues 612–637; that stretch reads VSAQMSQLELQQAALEGLALPHDLAV. Residues 651 to 660 are compositionally biased toward basic and acidic residues; that stretch reads QVDRTRDGLR. At Ser692 the chain carries Phosphoserine. Residues 694-712 form an interaction with PATL1 region; it reads SFTPTSVIRKMYESREKTK. Over residues 724 to 734 the composition is skewed to basic and acidic residues; sequence DGKEDTQKTSE. Composition is skewed to polar residues over residues 735-774 and 910-928; these read ENLL…QTSR and GSSS…NVPS. Phosphoserine occurs at positions 751, 919, and 949. Residues 938–983 form an interaction with LSM14A region; the sequence is QLEHRTSQRSSSPVGLAKWFGSDVLQQPLPSMPTKVISVDELEYRQ.

Belongs to the 4E-T/EIF4E-T family. In terms of assembly, interacts (via YXXXXLphi motif) with EIF4E. Interacts (via YXXXXLphi motif) with EIF4E2. Interacts with DDX6. Interacts with CSDE1/UNR. Interacts with CNOT1; promoting association with the CCR4-NOT complex. Interacts with LSM14A; promoting EIF4ENIF1 localization to P-bodies. Interacts with PATL1. Interacts with importin beta only in the presence of importin alpha, suggesting a direct interaction with importin alpha. Interacts with APOBEC3G in an RNA-dependent manner. Post-translationally, phosphorylation by MAPK8/JNK1 and or MAPK9/JNK2 in response to oxidative stress promotes P-body assembly. Phosphorylated during meiotic maturation. As to expression, highly expressed in developing oocytes.

It is found in the cytoplasm. It localises to the nucleus. The protein resides in the PML body. The protein localises to the nucleus speckle. Its function is as follows. EIF4E-binding protein that regulates translation and stability of mRNAs in processing bodies (P-bodies). Plays a key role in P-bodies to coordinate the storage of translationally inactive mRNAs in the cytoplasm and prevent their degradation. Acts as a binding platform for multiple RNA-binding proteins: promotes deadenylation of mRNAs via its interaction with the CCR4-NOT complex, and blocks decapping via interaction with eIF4E (EIF4E and EIF4E2), thereby protecting deadenylated and repressed mRNAs from degradation. Component of a multiprotein complex that sequesters and represses translation of proneurogenic factors during neurogenesis. Promotes miRNA-mediated translational repression. Involved in mRNA translational repression mediated by the miRNA effector TNRC6B by protecting TNRC6B-targeted mRNAs from decapping and subsequent decay. Required for the formation of P-bodies. Also acts as a nucleoplasmic shuttling protein, which mediates the nuclear import of EIF4E and DDX6 by a piggy-back mechanism. The polypeptide is Eukaryotic translation initiation factor 4E transporter (Mus musculus (Mouse)).